Consider the following 191-residue polypeptide: Protein DMP10 (191 aa).

A run of 4 helical transmembrane segments spans residues 15 to 35 (FANLLPTGTALIFETLLPSFS), 48 to 68 (LLTITLISFCAAACFFSSFTD), 114 to 134 (LSFVDFVHAFVSVIVFLALAV), and 158 to 178 (LMIKYFAVMVLTMASFFFAIF).

This sequence belongs to the plant DMP1 protein family. Restricted to flowers.

The protein localises to the membrane. Functionally, involved in membrane remodeling. This chain is Protein DMP10, found in Arabidopsis thaliana (Mouse-ear cress).